A 323-amino-acid chain; its full sequence is Delta(7)-sterol 5(6)-desaturase ERG3B (323 aa).

A run of 3 helical transmembrane segments spans residues 67–87 (ASILMIAGFGAAFIYVISAAL), 112–132 (IQSSFFAIPIIDLLTLPFFLG), and 150–170 (SWLAISTILYMVFNDLGIYWI). In terms of domain architecture, Fatty acid hydroxylase spans 157–285 (ILYMVFNDLG…YFTWADNYWG (129 aa)). The Histidine box-1 signature appears at 171 to 175 (HRLEH). Residues 184 to 188 (HKPHH) carry the Histidine box-2 motif. The Histidine box-3 motif lies at 262–266 (HTLHH).

It belongs to the sterol desaturase family.

It is found in the endoplasmic reticulum membrane. The catalysed reaction is episterol + 2 Fe(II)-[cytochrome b5] + O2 + 2 H(+) = 5-dehydroepisterol + 2 Fe(III)-[cytochrome b5] + 2 H2O. Its pathway is steroid metabolism; ergosterol biosynthesis. C-5 sterol desaturase; part of the third module of ergosterol biosynthesis pathway that includes the late steps of the pathway. ERG3A and ERG3BB catalyze the introduction of a C-5 double bond in the B ring to produce 5-dehydroepisterol. The third module or late pathway involves the ergosterol synthesis itself through consecutive reactions that mainly occur in the endoplasmic reticulum (ER) membrane. Firstly, the squalene synthase ERG9 catalyzes the condensation of 2 farnesyl pyrophosphate moieties to form squalene, which is the precursor of all steroids. Squalene synthase is crucial for balancing the incorporation of farnesyl diphosphate (FPP) into sterol and nonsterol isoprene synthesis. Secondly, squalene is converted into lanosterol by the consecutive action of the squalene epoxidase ERG1 and the lanosterol synthase ERG7. Then, the delta(24)-sterol C-methyltransferase ERG6 methylates lanosterol at C-24 to produce eburicol. Eburicol is the substrate of the sterol 14-alpha demethylase encoded by CYP51A, CYP51B and CYP51C, to yield 4,4,24-trimethyl ergosta-8,14,24(28)-trienol. CYP51B encodes the enzyme primarily responsible for sterol 14-alpha-demethylation, and plays an essential role in ascospore formation. CYP51A encodes an additional sterol 14-alpha-demethylase, induced on ergosterol depletion and responsible for the intrinsic variation in azole sensitivity. The third CYP51 isoform, CYP51C, does not encode a sterol 14-alpha-demethylase, but is required for full virulence on host wheat ears. The C-14 reductase ERG24 then reduces the C14=C15 double bond which leads to 4,4-dimethylfecosterol. A sequence of further demethylations at C-4, involving the C-4 demethylation complex containing the C-4 methylsterol oxidases ERG25, the sterol-4-alpha-carboxylate 3-dehydrogenase ERG26 and the 3-keto-steroid reductase ERG27, leads to the production of fecosterol via 4-methylfecosterol. ERG28 has a role as a scaffold to help anchor ERG25, ERG26 and ERG27 to the endoplasmic reticulum. The C-8 sterol isomerase ERG2 then catalyzes the reaction which results in unsaturation at C-7 in the B ring of sterols and thus converts fecosterol to episterol. The sterol-C5-desaturases ERG3A and ERG3BB then catalyze the introduction of a C-5 double bond in the B ring to produce 5-dehydroepisterol. The C-22 sterol desaturases ERG5A and ERG5B further convert 5-dehydroepisterol into ergosta-5,7,22,24(28)-tetraen-3beta-ol by forming the C-22(23) double bond in the sterol side chain. Finally, ergosta-5,7,22,24(28)-tetraen-3beta-ol is substrate of the C-24(28) sterol reductase ERG4 to produce ergosterol. In Gibberella zeae (strain ATCC MYA-4620 / CBS 123657 / FGSC 9075 / NRRL 31084 / PH-1) (Wheat head blight fungus), this protein is Delta(7)-sterol 5(6)-desaturase ERG3B.